Reading from the N-terminus, the 420-residue chain is O-methyltransferase penK (420 aa).

An S-adenosyl-L-methionine-binding site is contributed by Asp285. His325 acts as the Proton acceptor in catalysis.

It belongs to the class I-like SAM-binding methyltransferase superfamily. Cation-independent O-methyltransferase family.

Its pathway is secondary metabolite biosynthesis. It functions in the pathway alkaloid biosynthesis. It participates in mycotoxin biosynthesis. Functionally, O-methyltransferase; part of the gene cluster that mediates the biosynthesis of penigequinolones, potent insecticidal alkaloids that contain a highly modified 10-carbon prenyl group. The first stage is catalyzed by the nonribosomal peptide synthetase penN that condenses anthranilic acid and O-methyl-L-tyrosine to produce 4'-methoxycyclopeptin. 4'-methoxycyclopeptin is then converted to 4'-methoxydehydrocyclopeptin by the ketoglutarate-dependent dioxygenase penM through dehydrogenation to form a double bond between C-alpha and C-beta of the O-methyltyrosine side chain. PenM also converts its first product methoxydehydrocyclopeptin to 4'-methoxycyclopenin. The following conversion of 4'methoxycyclopenin into 4'-methoxyviridicatin is catalyzed by the cyclopenase penL. 4'-methoxyviridicatin is the precursor of quinolone natural products, and is further converted to quinolinone B. The prenyltransferase penI then catalyzes the canonical Friedel-Crafts alkylation of quinolinone B with dimethylallyl cation to yield dimethylallyl quinolone, which is subjected to FAD-dependent dehydrogenation by the FAD-linked oxidoreductase penH to yield conjugated aryl diene. The delta(3') double bond then serves as the site of the second alkylation with DMAPP catalyzed by the prenyltransferase penG to yield a carbenium ion intermediate, which can be attacked by H(2)O to yield a styrenyl quinolone containing a C3'-hydroxyprenyl chain, or undergo cyclization to yield yaequinolones J1 and J2. The conversion of the styrenyl quinolone into the tetrahydrofuran-containing yaequinolone C is performed by the FAD-dependent monooxygenase penE and involves epoxidation of the terminal C7'-C8' olefin, followed by epoxide ring opening initiated by the C3' hydroxyl group. The predicted cysteine hydrolase penJ acts as an epoxide hydrolase that enhances the rate of the 5-exo-tet cyclization step, increasing the yield of yaequinolone C. PenF catalyzes the cationic rearrangement of the epoxide formed by penE (before ring opening to produce yaequinolone C) into yaequinolone D. Finally, the short-chain dehydrogenase/reductase (SDR)-like reductase penD, catalyzes both the dehydration of yaequinolone D and the reduction of the resulting oxonium to yield penigequinolone. This chain is O-methyltransferase penK, found in Penicillium thymicola.